A 485-amino-acid polypeptide reads, in one-letter code: MYNVTYHQNSKAMATSDSIVDDRKQLHVATFPWLAFGHILPFLQLSKLIAEKGHKVSFLSTTRNIQRLSSHISPLINVVQLTLPRVQELPEDAEATTDVHPEDIQYLKKAVDGLQPEVTRFLEQHSPDWIIYDFTHYWLPSIAASLGISRAYFCVITPWTIAYLAPSSDAMINDSDGRTTVEDLTTPPKWFPFPTKVCWRKHDLARMEPYEAPGISDGYRMGMVFKGSDCLLFKCYHEFGTQWLPLLETLHQVPVVPVGLLPPEIPGDEKDETWVSIKKWLDGKQKGSVVYVALGSEALVSQTEVVELALGLELSGLPFVWAYRKPKGPAKSDSVELPDGFVERTRDRGLVWTSWAPQLRILSHESVCGFLTHCGSGSIVEGLMFGHPLIMLPIFCDQPLNARLLEDKQVGIEIPRNEEDGCLTKESVARSLRSVVVENEGEIYKANARALSKIYNDTKVEKEYVSQFVDYLEKNARAVAIDHES.

Residues Ser296, 355 to 356 (WA), 373 to 381 (HCGSGSIVE), and 395 to 398 (FCDQ) each bind UDP-alpha-D-glucose.

The protein belongs to the UDP-glycosyltransferase family.

Functionally, may glycosylate diterpenes or flavonols in leaves. The chain is UDP-glycosyltransferase 91D1 from Stevia rebaudiana (Stevia).